Consider the following 391-residue polypeptide: 4-hydroxy-3-methylbut-2-en-1-yl diphosphate synthase (flavodoxin) (391 aa).

The [4Fe-4S] cluster site is built by cysteine 286, cysteine 289, cysteine 321, and glutamate 328.

This sequence belongs to the IspG family. [4Fe-4S] cluster is required as a cofactor.

The catalysed reaction is (2E)-4-hydroxy-3-methylbut-2-enyl diphosphate + oxidized [flavodoxin] + H2O + 2 H(+) = 2-C-methyl-D-erythritol 2,4-cyclic diphosphate + reduced [flavodoxin]. It functions in the pathway isoprenoid biosynthesis; isopentenyl diphosphate biosynthesis via DXP pathway; isopentenyl diphosphate from 1-deoxy-D-xylulose 5-phosphate: step 5/6. Its function is as follows. Converts 2C-methyl-D-erythritol 2,4-cyclodiphosphate (ME-2,4cPP) into 1-hydroxy-2-methyl-2-(E)-butenyl 4-diphosphate. This is 4-hydroxy-3-methylbut-2-en-1-yl diphosphate synthase (flavodoxin) from Corynebacterium diphtheriae (strain ATCC 700971 / NCTC 13129 / Biotype gravis).